Reading from the N-terminus, the 155-residue chain is UPF0060 membrane protein MA_3936 (155 aa).

3 helical membrane-spanning segments follow: residues 8 to 28 (LCPFFLAALFEIRGGYLICLW), 35 to 55 (AVFGPLGRLMLAVCGIIPTFQ), and 62 to 82 (VYAAHGGIFIVFSLIWDLFVD).

Belongs to the UPF0060 family.

It is found in the cell membrane. In Methanosarcina acetivorans (strain ATCC 35395 / DSM 2834 / JCM 12185 / C2A), this protein is UPF0060 membrane protein MA_3936.